A 330-amino-acid polypeptide reads, in one-letter code: Ketol-acid reductoisomerase (NADP(+)) (330 aa).

The KARI N-terminal Rossmann domain maps to 3–184; sequence LPVYYDKDID…GGGRMGVLET (182 aa). NADP(+) contacts are provided by residues 26-29, Ser52, and Ser54; that span reads YGAQ. His109 is an active-site residue. An NADP(+)-binding site is contributed by Gly135. The region spanning 185–329 is the KARI C-terminal knotted domain; it reads SFKEECESDL…EILRAPFNHK (145 aa). Mg(2+) contacts are provided by Asp193, Glu197, Glu229, and Glu233. Ser254 contributes to the substrate binding site.

This sequence belongs to the ketol-acid reductoisomerase family. Requires Mg(2+) as cofactor.

The enzyme catalyses (2R)-2,3-dihydroxy-3-methylbutanoate + NADP(+) = (2S)-2-acetolactate + NADPH + H(+). The catalysed reaction is (2R,3R)-2,3-dihydroxy-3-methylpentanoate + NADP(+) = (S)-2-ethyl-2-hydroxy-3-oxobutanoate + NADPH + H(+). It participates in amino-acid biosynthesis; L-isoleucine biosynthesis; L-isoleucine from 2-oxobutanoate: step 2/4. Its pathway is amino-acid biosynthesis; L-valine biosynthesis; L-valine from pyruvate: step 2/4. In terms of biological role, involved in the biosynthesis of branched-chain amino acids (BCAA). Catalyzes an alkyl-migration followed by a ketol-acid reduction of (S)-2-acetolactate (S2AL) to yield (R)-2,3-dihydroxy-isovalerate. In the isomerase reaction, S2AL is rearranged via a Mg-dependent methyl migration to produce 3-hydroxy-3-methyl-2-ketobutyrate (HMKB). In the reductase reaction, this 2-ketoacid undergoes a metal-dependent reduction by NADPH to yield (R)-2,3-dihydroxy-isovalerate. This is Ketol-acid reductoisomerase (NADP(+)) from Helicobacter pylori (strain Shi470).